A 479-amino-acid polypeptide reads, in one-letter code: Proline--tRNA ligase (479 aa).

The protein belongs to the class-II aminoacyl-tRNA synthetase family. ProS type 3 subfamily. In terms of assembly, homodimer.

The protein localises to the cytoplasm. It carries out the reaction tRNA(Pro) + L-proline + ATP = L-prolyl-tRNA(Pro) + AMP + diphosphate. In terms of biological role, catalyzes the attachment of proline to tRNA(Pro) in a two-step reaction: proline is first activated by ATP to form Pro-AMP and then transferred to the acceptor end of tRNA(Pro). The protein is Proline--tRNA ligase of Mesomycoplasma hyopneumoniae (strain J / ATCC 25934 / NCTC 10110) (Mycoplasma hyopneumoniae).